We begin with the raw amino-acid sequence, 783 residues long: Probable galactinol--sucrose galactosyltransferase 5 (783 aa).

A phosphoserine mark is found at S9 and S11.

This sequence belongs to the glycosyl hydrolases 36 family.

It catalyses the reaction alpha-D-galactosyl-(1-&gt;3)-1D-myo-inositol + sucrose = raffinose + myo-inositol. In terms of biological role, transglycosidase operating by a ping-pong reaction mechanism. Involved in the synthesis of raffinose, a major soluble carbohydrate in seeds, roots and tubers. The chain is Probable galactinol--sucrose galactosyltransferase 5 (RFS5) from Arabidopsis thaliana (Mouse-ear cress).